We begin with the raw amino-acid sequence, 1292 residues long: Zinc finger protein 423 (1292 aa).

Basic residues predominate over residues 1-11 (MSRRKQAKPRS). 3 disordered regions span residues 1–21 (MSRRKQAKPRSVKVEEGEASD), 33–70 (AGGLEGEPECDRKTSRALEDRNSVTSQEERNEDDEDVE), and 95–125 (AHRCPGDGDDDPQLSWVASSPSSKDVASPTQ). Residues 41–54 (ECDRKTSRALEDRN) show a composition bias toward basic and acidic residues. Phosphoserine is present on residues S55 and S58. Residues 75–101 (YTCDHCQQDFESLADLTDHRAHRCPGD) form a C2H2-type 1; degenerate zinc finger. A compositionally biased stretch (polar residues) spans 110–125 (WVASSPSSKDVASPTQ). 7 C2H2-type zinc fingers span residues 146 to 168 (YPCQFCDKSFIRLSYLKRHEQIH), 174 to 196 (FKCTFCSRLFKHKRSRDRHIKLH), 202 to 224 (YHCHECEAAFSRSDHLKIHLKTH), 230 to 252 (FKCSVCKRGFSSTSSLQSHMQAH), 271 to 294 (FMCDYCEDTFSQTEELEKHVLTLH), 303 to 326 (LQCIHCPEVFVDESTLLAHIHQAH), and 331 to 353 (HKCPMCPEQFSSVEGVYCHLDSH). A disordered region spans residues 354–407 (RQPDSSNHSVSPDPVLGSVASMSSATPDSSASVERGSTPDSTLKPLRGQKKMRD). Residues 371–385 (SVASMSSATPDSSAS) show a composition bias toward low complexity. The segment at 417–441 (YSCPYCSKRDFTSLAVLEIHLKTIH) adopts a C2H2-type 9; degenerate zinc-finger fold. 3 C2H2-type zinc fingers span residues 449 to 472 (HTCQICLDSMPTLYNLNEHVRKLH), 488 to 511 (FHCNYCPEMFADINSLQEHIRVSH), and 525 to 548 (FFCNQCSMGFLTESSLTEHIQQAH). The C2H2-type 13; atypical zinc finger occupies 571-596 (YSCPYCTNSPIFGSILKLTKHIKENH). Positions 598-635 (NIPLAHSKKSKAEQSPVSSDVEVSSPKRQRLSGSANSI) are disordered. A Phosphoserine modification is found at S612. The segment covering 612 to 623 (SPVSSDVEVSSP) has biased composition (low complexity). 7 consecutive C2H2-type zinc fingers follow at residues 640–662 (YPCNQCDLKFSNFESFQTHLKLH), 670–692 (QACPQCKEDFDSQESLLQHLTVH), 700–723 (YVCESCDKQFSSVDDLQKHLLDMH), 728–751 (YHCTLCQEVFDSKVSIQVHLAVKH), 758–781 (YRCTACNWDFRKEADLQVHVKHSH), 789–811 (HKCIFCGETFSTEVELQCHITTH), and 815–838 (YNCRFCSKAFHAVILLEKHLREKH). The segment at 894–916 (YGCDICGAAYTMEVLLQNHRLRD) adopts a C2H2-type 21; degenerate zinc-finger fold. 3 C2H2-type zinc fingers span residues 938-960 (HKCNVCSRTFFSENGLREHLQTH), 967-989 (YMCPICGERFPSLLTLTEHKVTH), and 1028-1050 (FRCVVCMQTVTSTLELKIHGTFH). S1062 carries the post-translational modification Phosphoserine. The C2H2-type 25; degenerate zinc-finger motif lies at 1072 to 1090 (YKCALCLKEFRSKQDLVRL). C2H2-type zinc fingers lie at residues 1128–1151 (LRCPECNVKFESAEDLESHMQVDH), 1176–1198 (YQCIKCQMTFENEREIQIHVANH), 1206–1228 (HECKLCNQMFDSPAKLLCHLIEH), 1237–1260 (FKCPVCFTVFVQANKLQQHIFAVH), and 1267–1290 (YDCSQCPQKFFFQTELQNHTMSQH). A compositionally biased stretch (basic and acidic residues) spans 1144–1155 (ESHMQVDHRDLT). The interval 1144-1171 (ESHMQVDHRDLTPETSGPRKGAQTSPVP) is disordered.

The protein belongs to the krueppel C2H2-type zinc-finger protein family. In terms of assembly, homodimer. Interacts with SMAD1 and SMAD4. Interacts with EBF1. Interacts with PARP1. Interacts with CEP290. As to expression, within the cerebellum, Zfp423 is expressed in both ventricular and external germinal zones. Transiently expressed in newly differentiating olfactory-receptor neurons.

The protein localises to the nucleus. Transcription factor that can both act as an activator or a repressor depending on the context. Plays a central role in BMP signaling and olfactory neurogenesis. Associates with SMADs in response to BMP2 leading to activate transcription of BMP target genes. Acts as a transcriptional repressor via its interaction with EBF1, a transcription factor involved in terminal olfactory receptor neurons differentiation; this interaction preventing EBF1 to bind DNA and activate olfactory-specific genes. Involved in olfactory neurogenesis by participating in a developmental switch that regulates the transition from differentiation to maturation in olfactory receptor neurons. Controls proliferation and differentiation of neural precursors in cerebellar vermis formation. This chain is Zinc finger protein 423 (Znf423), found in Mus musculus (Mouse).